A 263-amino-acid chain; its full sequence is Polyglutamine-binding protein 1 (263 aa).

Residues 46 to 80 enclose the WW domain; that stretch reads EGLPPSWYKVFDPSCGLPYYWNVETDLVSWLSPHD. Residues 94-263 form a disordered region; the sequence is NSNADAEDKS…AEASRSKQQD (170 aa). The span at 99 to 173 shows a compositional bias: basic and acidic residues; it reads AEDKSERNLE…DKADREDGKD (75 aa). The stretch at 104–110 is one 1-1; approximate repeat; the sequence is ERNLEKV. The tract at residues 104-138 is 5 X 7 AA approximate tandem repeats of D-R-[NS]-H-E-K-S; that stretch reads ERNLEKVDRNHEKSDRSHEKPDRSHEKADRNHEKS. Residues 111 to 117 form a 1-2 repeat; the sequence is DRNHEKS. One copy of the 1-3; approximate repeat lies at 118 to 124; the sequence is DRSHEKP. Residues 125 to 131 form a 1-4; approximate repeat; it reads DRSHEKA. 10 consecutive repeat copies span residues 132–138, 139–140, 141–142, 143–144, 150–151, 152–153, 154–155, 156–157, 158–159, and 160–161. Positions 139-144 are 3 X 2 AA tandem repeats of [DE]-R; that stretch reads DRERER. Residues 150-161 form a 6 X 2 AA tandem repeats of [DE]-R region; that stretch reads DRERDRDRERER. An important for interaction with TXNL4A region spans residues 243 to 253; that stretch reads YPSPGAVLRAN. Ser245 carries the post-translational modification Phosphoserine.

Interacts with POU3F2/Brn-2, ATXN1, TXNL4A, HTT and AR. Interaction with ATXN1 correlates positively with the length of the polyglutamine tract. Interacts with RNA polymerase II large subunit in a phosphorylation-dependent manner. Forms a ternary complex with ATXN1 mutant and phosphorylated RNA polymerase II. Interacts (via C-terminus) with TXNL4A and CD2BP2. Interacts (via WW domain) with ATN1 and SF3B1, and may interact with additional splice factors. Interacts (via WW domain) with WBP11; Leading to reduce interaction between PQBP1 and TXNL4A. Interacts with CAPRIN1. Interacts with DDX1. Interacts with SFPQ. Interacts with KHSRP.

It localises to the nucleus. Its subcellular location is the nucleus speckle. It is found in the cytoplasmic granule. Intrinsically disordered protein that acts as a scaffold, and which is involved in different processes, such as pre-mRNA splicing, transcription regulation, innate immunity and neuron development. Interacts with splicing-related factors via the intrinsically disordered region and regulates alternative splicing of target pre-mRNA species. May suppress the ability of POU3F2 to transactivate the DRD1 gene in a POU3F2 dependent manner. Can activate transcription directly or via association with the transcription machinery. May be involved in ATXN1 mutant-induced cell death. The interaction with ATXN1 mutant reduces levels of phosphorylated RNA polymerase II large subunit. Involved in the assembly of cytoplasmic stress granule, possibly by participating in the transport of neuronal RNA granules. Also acts as an innate immune sensor of infection by retroviruses, by detecting the presence of reverse-transcribed DNA in the cytosol. Directly binds retroviral reverse-transcribed DNA in the cytosol and interacts with CGAS, leading to activate the cGAS-STING signaling pathway, triggering type-I interferon production. The protein is Polyglutamine-binding protein 1 (Pqbp1) of Rattus norvegicus (Rat).